A 107-amino-acid chain; its full sequence is Large ribosomal subunit protein uL24 (107 aa).

This sequence belongs to the universal ribosomal protein uL24 family. In terms of assembly, part of the 50S ribosomal subunit.

Its function is as follows. One of two assembly initiator proteins, it binds directly to the 5'-end of the 23S rRNA, where it nucleates assembly of the 50S subunit. One of the proteins that surrounds the polypeptide exit tunnel on the outside of the subunit. The polypeptide is Large ribosomal subunit protein uL24 (Natranaerobius thermophilus (strain ATCC BAA-1301 / DSM 18059 / JW/NM-WN-LF)).